Consider the following 162-residue polypeptide: uncharacterized protein (162 aa).

The HTH asnC-type domain maps to 6-78 (LDDLDRNILR…ALIVLEVGKP (73 aa)). The H-T-H motif DNA-binding region spans 25–44 (ISELSEQLKKPESTIHFRIK).

This is an uncharacterized protein from Pyrococcus furiosus (strain ATCC 43587 / DSM 3638 / JCM 8422 / Vc1).